A 316-amino-acid polypeptide reads, in one-letter code: Probable prolyl 4-hydroxylase 7 (316 aa).

At 1 to 4 (MDSR) the chain is on the cytoplasmic side. A helical; Signal-anchor for type II membrane protein transmembrane segment spans residues 5–24 (IFLAFSLCFLFTLPLISSAP). At 25–316 (NRFLTRSSNT…CRKSCKACSS (292 aa)) the chain is on the lumenal side. N-linked (GlcNAc...) asparagine glycosylation is present at N96. Residues 139–261 (NGESMQILHY…KWSATRWIHV (123 aa)) form the Fe2OG dioxygenase domain. 2 residues coordinate Fe cation: H157 and D159. N233 is a glycosylation site (N-linked (GlcNAc...) asparagine). Position 242 (H242) interacts with Fe cation. 2-oxoglutarate is bound at residue K252. Positions 274-314 (CMDENVSCEKWAKAGECQKNPTYMVGSDKDHGYCRKSCKAC) constitute a ShKT domain. Disulfide bonds link C274–C314, C281–C307, and C290–C311. Residue N278 is glycosylated (N-linked (GlcNAc...) asparagine).

It belongs to the P4HA family. Fe(2+) serves as cofactor. Requires L-ascorbate as cofactor.

It localises to the endoplasmic reticulum membrane. It catalyses the reaction L-prolyl-[collagen] + 2-oxoglutarate + O2 = trans-4-hydroxy-L-prolyl-[collagen] + succinate + CO2. In terms of biological role, catalyzes the post-translational formation of 4-hydroxyproline in -Xaa-Pro-Gly- sequences in proline-rich peptide sequences of plant glycoproteins and other proteins. Hydroxyprolines are important constituent of many plant cell wall glycoproteins such as extensins, hydroxyproline-rich glycoproteins, lectins and arabinogalactan proteins. This chain is Probable prolyl 4-hydroxylase 7, found in Arabidopsis thaliana (Mouse-ear cress).